Here is an 805-residue protein sequence, read N- to C-terminus: Cell division cycle protein 48 homolog (805 aa).

ATP contacts are provided by residues 249–256 (GPPGSGKT) and 522–529 (GPPGCGKT). Residues 783–805 (GATAAADPFATSNAAADDDDLYS) are disordered.

The protein belongs to the AAA ATPase family.

In terms of biological role, probably functions in cell division and growth processes. The polypeptide is Cell division cycle protein 48 homolog (CAFP) (Capsicum annuum (Capsicum pepper)).